The following is a 114-amino-acid chain: Photosystem II reaction center Psb28 protein (114 aa).

It belongs to the Psb28 family. In terms of assembly, part of the photosystem II complex.

The protein resides in the plastid. It is found in the chloroplast thylakoid membrane. The protein is Photosystem II reaction center Psb28 protein of Thalassiosira pseudonana (Marine diatom).